A 386-amino-acid polypeptide reads, in one-letter code: Homeobox protein Hox-A13 (386 aa).

The segment at residues 320–379 (GRKKRVPYTKVQLKELEREYATNKFITKDKRRRISATTNLSERQVTIWFQNRRVKEKKVI) is a DNA-binding region (homeobox).

This sequence belongs to the Abd-B homeobox family. As to quaternary structure, binds DNA as a homodimer. Interacts with MEIS1, MEIS2 and MEIS3.

Its subcellular location is the nucleus. Functionally, sequence-specific, AT-rich binding transcription factor which is part of a developmental regulatory system that provides cells with specific positional identities on the anterior-posterior axis. In Mus musculus (Mouse), this protein is Homeobox protein Hox-A13 (Hoxa13).